The sequence spans 296 residues: Large ribosomal subunit protein uL15m (296 aa).

The N-terminal 20 residues, 1–20 (MSLIKKPGGKTIEVVKNLPR), are a transit peptide targeting the mitochondrion. A disordered region spans residues 25–59 (NLRPNPGAKTLEKRRGRGMHGGNRSGWGHKGERQR).

It belongs to the universal ribosomal protein uL15 family. Component of the mitochondrial ribosome large subunit (39S) which comprises a 16S rRNA and about 50 distinct proteins.

The protein resides in the mitochondrion. The polypeptide is Large ribosomal subunit protein uL15m (mrpl15) (Danio rerio (Zebrafish)).